Here is a 222-residue protein sequence, read N- to C-terminus: Coiled-coil domain-containing protein 70 (222 aa).

Coiled-coil stretches lie at residues 34–62 (LQEE…WNFR) and 129–188 (NALW…KAAW).

This is Coiled-coil domain-containing protein 70 (CCDC70) from Bos taurus (Bovine).